A 309-amino-acid chain; its full sequence is Transcription termination/antitermination protein NusG (309 aa).

Disordered stretches follow at residues 1–24 (MSDP…ADDE) and 58–91 (EGDH…VEAG). The segment covering 65–91 (TDEDIEAGAVETDEDVETDTDEDVEAG) has biased composition (acidic residues).

This sequence belongs to the NusG family.

Functionally, participates in transcription elongation, termination and antitermination. The polypeptide is Transcription termination/antitermination protein NusG (Streptomyces galbus).